The primary structure comprises 2035 residues: Ral GTPase-activating protein subunit alpha-1 (2035 aa).

Residues 343-384 form a disordered region; the sequence is LVSREESKNDTVDKADKTAEPEQSHSNTSTLTEREPSSSSLC. Residues 345–365 show a composition bias toward basic and acidic residues; it reads SREESKNDTVDKADKTAEPEQ. Residues 366–384 show a composition bias toward polar residues; it reads SHSNTSTLTEREPSSSSLC. Phosphoserine is present on residues S710 and S720. Positions 714-754 are disordered; the sequence is SFSRGWSRDQPGQAPMRQRSATTTGSPGTEKARSIVRQKTV. At T753 the chain carries Phosphothreonine. At S772 the chain carries Phosphoserine. At T777 the chain carries Phosphothreonine. S796 carries the post-translational modification Phosphoserine. Basic and acidic residues predominate over residues 807 to 817; sequence ERAKVNKEDTS. Disordered regions lie at residues 807 to 834 and 848 to 911; these read ERAK…SANV and SGNA…SHSD. 2 stretches are compositionally biased toward polar residues: residues 824–833 and 849–862; these read NSETGGSSAN and GNAS…SSPG. 3 positions are modified to phosphoserine: S859, S860, and S863. Residues 894–911 show a composition bias toward low complexity; the sequence is SPASAGSSDLMSSDSHSD. Phosphoserine is present on residues S985, S989, S993, and S999. The tract at residues 986 to 1008 is disordered; the sequence is ESASPVHSALGSRSQTPSPSTLN. Residue T1001 is modified to Phosphothreonine. Phosphoserine occurs at positions 1003 and 1477. Residues 1326–2034 are minimal domain that binds to TCF3/E12; that stretch reads FTNKTVAHVA…PYHHFPADAD (709 aa). The stretch at 1713–1746 forms a coiled coil; it reads SEKQENDVINAILKQYTEEKEFVEKHFNDLNMKA. The Rap-GAP domain maps to 1795–2003; the sequence is LRNLDSRQCR…EERARYLQTI (209 aa).

Component of the heterodimeric RalGAP1 complex with RALGAPB. Heterodimerization is required for activity. Interacts with the HLH region of TCF3/isoform E12. In terms of tissue distribution, highly expressed in brain, thymus and testis with lower levels in lung and spleen and barely detectable in heart or liver (at protein level).

It localises to the cytoplasm. It is found in the nucleus. Catalytic subunit of the heterodimeric RalGAP1 complex which acts as a GTPase activator for the Ras-like small GTPases RALA and RALB. The protein is Ral GTPase-activating protein subunit alpha-1 (Ralgapa1) of Rattus norvegicus (Rat).